The following is a 395-amino-acid chain: Formate-dependent phosphoribosylglycinamide formyltransferase (395 aa).

Residues 22–23 (EL) and glutamate 82 contribute to the N(1)-(5-phospho-beta-D-ribosyl)glycinamide site. ATP contacts are provided by residues arginine 115, lysine 156, 161–166 (SSGKGQ), 196–199 (EGFI), and glutamate 204. The ATP-grasp domain maps to 120–309 (RLAAETLGLP…EFALHARAIL (190 aa)). Residues glutamate 268 and glutamate 280 each coordinate Mg(2+). N(1)-(5-phospho-beta-D-ribosyl)glycinamide contacts are provided by residues aspartate 287, lysine 356, and 363–364 (RR).

It belongs to the PurK/PurT family. In terms of assembly, homodimer.

It carries out the reaction N(1)-(5-phospho-beta-D-ribosyl)glycinamide + formate + ATP = N(2)-formyl-N(1)-(5-phospho-beta-D-ribosyl)glycinamide + ADP + phosphate + H(+). It functions in the pathway purine metabolism; IMP biosynthesis via de novo pathway; N(2)-formyl-N(1)-(5-phospho-D-ribosyl)glycinamide from N(1)-(5-phospho-D-ribosyl)glycinamide (formate route): step 1/1. Involved in the de novo purine biosynthesis. Catalyzes the transfer of formate to 5-phospho-ribosyl-glycinamide (GAR), producing 5-phospho-ribosyl-N-formylglycinamide (FGAR). Formate is provided by PurU via hydrolysis of 10-formyl-tetrahydrofolate. The sequence is that of Formate-dependent phosphoribosylglycinamide formyltransferase from Stenotrophomonas maltophilia (strain R551-3).